The sequence spans 514 residues: 2'-5'-oligoadenylate synthase-like protein (514 aa).

The residue at position 2 (alanine 2) is an N-acetylalanine. Ubiquitin-like domains lie at 354–433 and 434–509; these read IHLT…IPSE and IQVF…KGEA.

Belongs to the 2-5A synthase family. Specifically interacts with the ligand binding domain of the thyroid receptor (TR). TRIP14 does not require the presence of thyroid hormone for its interaction. Binds MBD1. As to expression, expressed in most tissues, with the highest levels in primary blood Leukocytes and other hematopoietic system tissues, colon, stomach and to some extent in testis.

The protein resides in the nucleus. It is found in the nucleolus. Its subcellular location is the cytoplasm. In terms of biological role, does not have 2'-5'-OAS activity, but can bind double-stranded RNA. Displays antiviral activity against encephalomyocarditis virus (EMCV) and hepatitis C virus (HCV) via an alternative antiviral pathway independent of RNase L. The polypeptide is 2'-5'-oligoadenylate synthase-like protein (OASL) (Homo sapiens (Human)).